Reading from the N-terminus, the 88-residue chain is MKLSQIALICIVIASLFAMHECERLEATEEEKSSKIYVPPCYETICSFSLKKDCWCCFEPLVHKNLCWGVHDFPNAKELCFNEYSKKI.

An N-terminal signal peptide occupies residues 1–22 (MKLSQIALICIVIASLFAMHEC). Cystine bridges form between cysteine 41-cysteine 56, cysteine 54-cysteine 80, and cysteine 57-cysteine 67.

Belongs to the MEG family. Expressed in stems, leaves and flowers.

This Arabidopsis thaliana (Mouse-ear cress) protein is EMBRYO SURROUNDING FACTOR 1-like protein 3 (ESFL3).